The primary structure comprises 150 residues: T-complex protein 1 subunit beta (150 aa).

Mg(2+) is bound at residue Asp35. ADP-binding residues include Gly36, Thr37, Thr38, and Ser39. Residues Gly36, Thr37, and Thr38 each coordinate ATP.

The protein belongs to the TCP-1 chaperonin family. As to quaternary structure, component of the chaperonin-containing T-complex (TRiC), a hexadecamer composed of two identical back-to-back stacked rings enclosing a protein folding chamber. Each ring is made up of eight different subunits: TCP1/CCT1, CCT2, CCT3, CCT4, CCT5, CCT6A/CCT6, CCT7, CCT8. Interacts with PACRG. Interacts with FLCN. Interacts with DLEC1. Interacts with SVEP1.

The protein resides in the cytoplasm. It carries out the reaction ATP + H2O = ADP + phosphate + H(+). Component of the chaperonin-containing T-complex (TRiC), a molecular chaperone complex that assists the folding of actin, tubulin and other proteins upon ATP hydrolysis. The TRiC complex mediates the folding of WRAP53/TCAB1, thereby regulating telomere maintenance. As part of the TRiC complex may play a role in the assembly of BBSome, a complex involved in ciliogenesis regulating transports vesicles to the cilia. The sequence is that of T-complex protein 1 subunit beta from Mesocricetus auratus (Golden hamster).